We begin with the raw amino-acid sequence, 484 residues long: CUGBP Elav-like family member 2 (484 aa).

2 necessary for nuclear export regions span residues 1–89 and 90–178; these read MNGA…PGMH and HPIQ…EGCS. 3 RRM domains span residues 16–99, 108–188, and 399–477; these read IKTF…PADS, RKLF…FADT, and ANLF…LKRS. Residues 188–240 are necessary for splicing activity; sequence TQKDKEQRRLQQQLAQQMQQLNTATWGNLTGLGGLTPQYLALLQQATSSSNLG. Residues 347–399 are necessary for nuclear localization; that stretch reads GLTNGTAGTMDALTQAYSGIQQYAAAALPTLYSQSLLQQQSAAGSQKEGPEGA. Positions 426–484 are necessary for nuclear localization and splicing activity; that stretch reads ISAKVFIDKQTNLSKCFGFVSYDNPVSAQAAIQAMNGFQIGMKRLKVQLKRSKNDSKPY.

The protein belongs to the CELF/BRUNOL family. In terms of tissue distribution, expressed in heart.

The protein localises to the nucleus. Its subcellular location is the cytoplasm. RNA-binding protein implicated in the regulation of several post-transcriptional events. May be involved in mRNA translation repression and stability. Mediates exon inclusion in TNNT2 pre-mRNA. The chain is CUGBP Elav-like family member 2 (CELF2) from Gallus gallus (Chicken).